We begin with the raw amino-acid sequence, 56 residues long: uncharacterized protein (56 aa).

2 4Fe-4S ferredoxin-type domains span residues 2 to 28 (VKID…NLIE) and 29 to 56 (HIIV…LEGE). Residues Cys9, Cys12, Cys15, Cys19, Cys38, Cys41, Cys44, and Cys48 each coordinate [4Fe-4S] cluster.

[4Fe-4S] cluster serves as cofactor.

Its function is as follows. Ferredoxins are iron-sulfur proteins that transfer electrons in a wide variety of metabolic reactions. This is an uncharacterized protein from Methanocaldococcus jannaschii (strain ATCC 43067 / DSM 2661 / JAL-1 / JCM 10045 / NBRC 100440) (Methanococcus jannaschii).